Reading from the N-terminus, the 282-residue chain is Bifunctional protein FolD (282 aa).

NADP(+)-binding positions include 164–166 and Ser189; that span reads GRS.

This sequence belongs to the tetrahydrofolate dehydrogenase/cyclohydrolase family. In terms of assembly, homodimer.

It catalyses the reaction (6R)-5,10-methylene-5,6,7,8-tetrahydrofolate + NADP(+) = (6R)-5,10-methenyltetrahydrofolate + NADPH. The enzyme catalyses (6R)-5,10-methenyltetrahydrofolate + H2O = (6R)-10-formyltetrahydrofolate + H(+). It functions in the pathway one-carbon metabolism; tetrahydrofolate interconversion. In terms of biological role, catalyzes the oxidation of 5,10-methylenetetrahydrofolate to 5,10-methenyltetrahydrofolate and then the hydrolysis of 5,10-methenyltetrahydrofolate to 10-formyltetrahydrofolate. This Lachnoclostridium phytofermentans (strain ATCC 700394 / DSM 18823 / ISDg) (Clostridium phytofermentans) protein is Bifunctional protein FolD.